The following is a 416-amino-acid chain: Gamma-glutamyl phosphate reductase (416 aa).

It belongs to the gamma-glutamyl phosphate reductase family.

The protein localises to the cytoplasm. It catalyses the reaction L-glutamate 5-semialdehyde + phosphate + NADP(+) = L-glutamyl 5-phosphate + NADPH + H(+). Its pathway is amino-acid biosynthesis; L-proline biosynthesis; L-glutamate 5-semialdehyde from L-glutamate: step 2/2. Catalyzes the NADPH-dependent reduction of L-glutamate 5-phosphate into L-glutamate 5-semialdehyde and phosphate. The product spontaneously undergoes cyclization to form 1-pyrroline-5-carboxylate. This Streptococcus uberis (strain ATCC BAA-854 / 0140J) protein is Gamma-glutamyl phosphate reductase.